The following is a 613-amino-acid chain: Na(+)/H(+) antiporter NhaA 1 (613 aa).

The disordered stretch occupies residues 1–24 (MTEASARTIGPLPSRFSRDPKTPR). The segment at 1-408 (MTEASARTIG…DPARQDEARV (408 aa)) is na(+)/H(+) antiporter NhaA. The next 11 membrane-spanning stretches (helical) occupy residues 29–49 (AAAA…NSPW), 81–101 (GLMA…FVIG), 110–130 (AVPV…FLTF), 138–158 (QAWG…LAVI), 168–188 (IFLL…IALF), 191–211 (DDLK…LAMV), 231–251 (IALY…AVLI), 300–320 (AVGP…NAGV), 337–357 (WGIV…ATAL), 377–397 (GGAA…DVAI), and 408–428 (VGVL…FRIT). The Thioredoxin domain occupies 409–613 (GVLIASVLAF…SLIRALEAGR (205 aa)).

The protein in the N-terminal section; belongs to the NhaA Na(+)/H(+) (TC 2.A.33) antiporter family.

The protein resides in the cell membrane. It carries out the reaction Na(+)(in) + 2 H(+)(out) = Na(+)(out) + 2 H(+)(in). In terms of biological role, na(+)/H(+) antiporter that extrudes sodium in exchange for external protons. In Mycobacterium sp. (strain JLS), this protein is Na(+)/H(+) antiporter NhaA 1.